A 195-amino-acid polypeptide reads, in one-letter code: Coagulogen (195 aa).

An N-terminal signal peptide occupies residues 1–20 (MEKKLLGIAILFVTVVSVLA). Intrachain disulfides connect C28–C188, C30–C115, C80–C182, C85–C141, C95–C189, C108–C161, C147–C191, and C155–C193.

The protein belongs to the coagulin family. Coagulogen is cleaved after Arg-38 and Arg-66 by a clotting enzyme contained in the hemocyte and activated by a bacterial endotoxin (lipopolysaccharide). This cleavage releases the peptide C and leaves 2 chains of coagulin, A and B, linked by two disulfide bonds. Coagulin molecules interlink to form a gel. Hemolymph.

It is found in the secreted. In terms of biological role, coagulogen is a gel-forming protein of hemolymph; it hinders the spread of invaders by immobilizing them. This Limulus polyphemus (Atlantic horseshoe crab) protein is Coagulogen.